Here is a 61-residue protein sequence, read N- to C-terminus: Large ribosomal subunit protein bL32 (61 aa).

It belongs to the bacterial ribosomal protein bL32 family.

The protein is Large ribosomal subunit protein bL32 of Hyphomonas neptunium (strain ATCC 15444).